We begin with the raw amino-acid sequence, 152 residues long: Phospholipase A2 pkP2 (152 aa).

The N-terminal stretch at 1 to 21 is a signal peptide; sequence MNPAHLLVLLAVCVSLLGASA. Positions 22–27 are excised as a propeptide; sequence IPPLPL. Cystine bridges form between Cys38-Cys104, Cys54-Cys151, Cys56-Cys72, Cys71-Cys132, Cys78-Cys125, Cys88-Cys118, and Cys111-Cys123. 3 residues coordinate Ca(2+): Tyr55, Gly57, and Gly59. Residue His75 is part of the active site. Asp76 contacts Ca(2+). Asp126 is a catalytic residue.

Belongs to the phospholipase A2 family. Group I subfamily. Requires Ca(2+) as cofactor.

It localises to the secreted. It carries out the reaction a 1,2-diacyl-sn-glycero-3-phosphocholine + H2O = a 1-acyl-sn-glycero-3-phosphocholine + a fatty acid + H(+). PA2 catalyzes the calcium-dependent hydrolysis of the 2-acyl groups in 3-sn-phosphoglycerides. This is Phospholipase A2 pkP2 from Laticauda semifasciata (Black-banded sea krait).